The sequence spans 361 residues: Chorismate synthase (361 aa).

Positions 37-59 (TEADLQHDLDRRRPGTSRYTTQR) are disordered. Residues 40–49 (DLQHDLDRRR) show a composition bias toward basic and acidic residues. NADP(+)-binding residues include R48 and R54. Residues 125–127 (RSS), 238–239 (NA), G278, 293–297 (KPTSS), and R319 contribute to the FMN site.

The protein belongs to the chorismate synthase family. As to quaternary structure, homotetramer. The cofactor is FMNH2.

It catalyses the reaction 5-O-(1-carboxyvinyl)-3-phosphoshikimate = chorismate + phosphate. It functions in the pathway metabolic intermediate biosynthesis; chorismate biosynthesis; chorismate from D-erythrose 4-phosphate and phosphoenolpyruvate: step 7/7. Catalyzes the anti-1,4-elimination of the C-3 phosphate and the C-6 proR hydrogen from 5-enolpyruvylshikimate-3-phosphate (EPSP) to yield chorismate, which is the branch point compound that serves as the starting substrate for the three terminal pathways of aromatic amino acid biosynthesis. This reaction introduces a second double bond into the aromatic ring system. The polypeptide is Chorismate synthase (Serratia proteamaculans (strain 568)).